The sequence spans 166 residues: Regulatory protein RecX (166 aa).

The protein belongs to the RecX family.

Its subcellular location is the cytoplasm. Modulates RecA activity. The sequence is that of Regulatory protein RecX from Salmonella newport (strain SL254).